We begin with the raw amino-acid sequence, 276 residues long: Acetyl-coenzyme A carboxylase carboxyl transferase subunit beta (276 aa).

The region spanning 24–276 (LWRECSNCHE…NNLLNLHSDK (253 aa)) is the CoA carboxyltransferase N-terminal domain. Cysteine 28, cysteine 31, cysteine 46, and cysteine 49 together coordinate Zn(2+). Residues 28-49 (CSNCHEKFYYRRAGVYEVCPNC) form a C4-type zinc finger.

This sequence belongs to the AccD/PCCB family. Acetyl-CoA carboxylase is a heterohexamer composed of biotin carboxyl carrier protein (AccB), biotin carboxylase (AccC) and two subunits each of ACCase subunit alpha (AccA) and ACCase subunit beta (AccD). Requires Zn(2+) as cofactor.

The protein localises to the cytoplasm. The catalysed reaction is N(6)-carboxybiotinyl-L-lysyl-[protein] + acetyl-CoA = N(6)-biotinyl-L-lysyl-[protein] + malonyl-CoA. The protein operates within lipid metabolism; malonyl-CoA biosynthesis; malonyl-CoA from acetyl-CoA: step 1/1. Its function is as follows. Component of the acetyl coenzyme A carboxylase (ACC) complex. Biotin carboxylase (BC) catalyzes the carboxylation of biotin on its carrier protein (BCCP) and then the CO(2) group is transferred by the transcarboxylase to acetyl-CoA to form malonyl-CoA. This chain is Acetyl-coenzyme A carboxylase carboxyl transferase subunit beta, found in Pediococcus pentosaceus (strain ATCC 25745 / CCUG 21536 / LMG 10740 / 183-1w).